A 190-amino-acid polypeptide reads, in one-letter code: Imidazoleglycerol-phosphate dehydratase (190 aa).

This sequence belongs to the imidazoleglycerol-phosphate dehydratase family.

It is found in the cytoplasm. It carries out the reaction D-erythro-1-(imidazol-4-yl)glycerol 3-phosphate = 3-(imidazol-4-yl)-2-oxopropyl phosphate + H2O. Its pathway is amino-acid biosynthesis; L-histidine biosynthesis; L-histidine from 5-phospho-alpha-D-ribose 1-diphosphate: step 6/9. The sequence is that of Imidazoleglycerol-phosphate dehydratase from Aliarcobacter butzleri (strain RM4018) (Arcobacter butzleri).